The chain runs to 142 residues: Large ribosomal subunit protein uL13 (142 aa).

The protein belongs to the universal ribosomal protein uL13 family. Part of the 50S ribosomal subunit.

Its function is as follows. This protein is one of the early assembly proteins of the 50S ribosomal subunit, although it is not seen to bind rRNA by itself. It is important during the early stages of 50S assembly. In Proteus mirabilis (strain HI4320), this protein is Large ribosomal subunit protein uL13.